The chain runs to 194 residues: GTP cyclohydrolase 1 (194 aa).

The Zn(2+) site is built by cysteine 83, histidine 86, and cysteine 155.

It belongs to the GTP cyclohydrolase I family. As to quaternary structure, toroid-shaped homodecamer, composed of two pentamers of five dimers.

It catalyses the reaction GTP + H2O = 7,8-dihydroneopterin 3'-triphosphate + formate + H(+). It participates in cofactor biosynthesis; 7,8-dihydroneopterin triphosphate biosynthesis; 7,8-dihydroneopterin triphosphate from GTP: step 1/1. In Streptococcus pyogenes serotype M5 (strain Manfredo), this protein is GTP cyclohydrolase 1.